We begin with the raw amino-acid sequence, 261 residues long: Ribonuclease HII (261 aa).

In terms of domain architecture, RNase H type-2 spans 71–259; it reads KYIAGVDEVG…VKEAKLHFDS (189 aa). The a divalent metal cation site is built by Asp-77, Glu-78, and Asp-169.

Belongs to the RNase HII family. Requires Mn(2+) as cofactor. The cofactor is Mg(2+).

The protein localises to the cytoplasm. The enzyme catalyses Endonucleolytic cleavage to 5'-phosphomonoester.. Endonuclease that specifically degrades the RNA of RNA-DNA hybrids. This Listeria monocytogenes serotype 4a (strain HCC23) protein is Ribonuclease HII.